Reading from the N-terminus, the 414-residue chain is Serpin A12 (414 aa).

Residues 1-20 (MNPTLGLAIFLAVLLTVKGL) form the signal peptide. 2 N-linked (GlcNAc...) (complex) asparagine glycosylation sites follow: Asn-221 and Asn-233. An N-linked (GlcNAc...) (high mannose) asparagine glycan is attached at Asn-267. The segment at 364–382 (GTEGAAGTGAQTLPMETPL) is reactive center loop.

The protein belongs to the serpin family. Forms a stable complex with KLK7. In terms of processing, glycosylation slightly decreases affinity for heparin, but otherwise has no significant effect on KLK7 inhibitory activity or thermal stability of the protein. In terms of tissue distribution, expressed in visceral adipose tissues.

It is found in the secreted. With respect to regulation, inhibition of KLK7 is enhanced by heparin. Functionally, adipokine that modulates insulin action by specifically inhibiting its target protease KLK7 in white adipose tissues. This chain is Serpin A12 (SERPINA12), found in Homo sapiens (Human).